Reading from the N-terminus, the 628-residue chain is E3 SUMO-protein ligase PIAS3 (628 aa).

The segment at 1–200 (MAELGELKHM…QLRFCLCETS (200 aa)) is interaction with CCAR2. Positions 11–45 (VMSFRVSELQVLLGFAGRNKSGRKHELLAKALHLL) constitute an SAP domain. The LXXLL motif signature appears at 19-23 (LQVLL). Residues lysine 46 and lysine 56 each participate in a glycyl lysine isopeptide (Lys-Gly) (interchain with G-Cter in SUMO2) cross-link. A disordered region spans residues 72-95 (PSDLSLLSLPPGTSPVGSPSPLAS). A PINIT domain is found at 115-280 (MHPPLPQPVH…SLSVYLVRQL (166 aa)). Residues lysine 230 and lysine 307 each participate in a glycyl lysine isopeptide (Lys-Gly) (interchain with G-Cter in SUMO2) cross-link. Residues 312–393 (PDSEVATTSL…FMEILNSCSD (82 aa)) form an SP-RING-type zinc finger. Zn(2+) contacts are provided by cysteine 343, histidine 345, cysteine 366, and cysteine 369. Residues 450-460 (LTIESSSDEED) form an SUMO1-binding region. Residues lysine 466 and lysine 482 each participate in a glycyl lysine isopeptide (Lys-Gly) (interchain with G-Cter in SUMO2) cross-link. Positions 573–618 (LAPTLGSSHRSATPAPAPGRVSSIVAPGSSLREGHGGPLPSGPSLT) are disordered.

It belongs to the PIAS family. Binds SUMO1 and UBE2I. Interacts with AR, BCL11A, GFI1, HMGA2, IRF1, MITF, NCOA2, as well as with STAT3, after treatment with IL6, CNTF or OSM and with STAT5, after PRL stimulation. Interacts with PLAG1. Interacts with ZFHX3. Interacts with MTA1. Interacts with CCAR2 (via N-terminus). Interacts with TRIM8. Interacts with PRDM1. Sumoylated. As to expression, widely expressed, with highest levels in lung, kidney and spleen.

Its subcellular location is the cytoplasm. The protein resides in the nucleus. It localises to the nucleus speckle. It functions in the pathway protein modification; protein sumoylation. Functionally, functions as an E3-type small ubiquitin-like modifier (SUMO) ligase, stabilizing the interaction between UBE2I and the substrate, and as a SUMO-tethering factor. Plays a crucial role as a transcriptional coregulation in various cellular pathways, including the STAT pathway and the steroid hormone signaling pathway. The effects of this transcriptional coregulation, transactivation or silencing, may vary depending upon the biological context. Enhances the sumoylation of MTA1 and may participate in its paralog-selective sumoylation. Sumoylates CCAR2 which promotes its interaction with SIRT1. Diminishes the sumoylation of ZFHX3 by preventing the colocalization of ZFHX3 with SUMO1 in the nucleus. This Rattus norvegicus (Rat) protein is E3 SUMO-protein ligase PIAS3 (Pias3).